The sequence spans 378 residues: Chaperone protein DnaJ (378 aa).

Residues 5-70 (DYYESLGVAK…QKRAAYDQYG (66 aa)) enclose the J domain. Residues 133–211 (GVTKEIRIPA…CHGHGRVEKS (79 aa)) form a CR-type zinc finger. Zn(2+) contacts are provided by Cys-146, Cys-149, Cys-163, Cys-166, Cys-185, Cys-188, Cys-199, and Cys-202. CXXCXGXG motif repeat units lie at residues 146 to 153 (CDVCHGNG), 163 to 170 (CPTCHGNG), 185 to 192 (CPHCHGRG), and 199 to 206 (CVKCHGHG).

This sequence belongs to the DnaJ family. In terms of assembly, homodimer. Zn(2+) serves as cofactor.

Its subcellular location is the cytoplasm. Participates actively in the response to hyperosmotic and heat shock by preventing the aggregation of stress-denatured proteins and by disaggregating proteins, also in an autonomous, DnaK-independent fashion. Unfolded proteins bind initially to DnaJ; upon interaction with the DnaJ-bound protein, DnaK hydrolyzes its bound ATP, resulting in the formation of a stable complex. GrpE releases ADP from DnaK; ATP binding to DnaK triggers the release of the substrate protein, thus completing the reaction cycle. Several rounds of ATP-dependent interactions between DnaJ, DnaK and GrpE are required for fully efficient folding. Also involved, together with DnaK and GrpE, in the DNA replication of plasmids through activation of initiation proteins. This chain is Chaperone protein DnaJ, found in Pectobacterium carotovorum subsp. carotovorum (strain PC1).